The chain runs to 366 residues: tRNA/tmRNA (uracil-C(5))-methyltransferase (366 aa).

5 residues coordinate S-adenosyl-L-methionine: Q190, Y218, N223, E239, and D299. The active-site Nucleophile is C324. The active-site Proton acceptor is E358.

This sequence belongs to the class I-like SAM-binding methyltransferase superfamily. RNA M5U methyltransferase family. TrmA subfamily.

The catalysed reaction is uridine(54) in tRNA + S-adenosyl-L-methionine = 5-methyluridine(54) in tRNA + S-adenosyl-L-homocysteine + H(+). It carries out the reaction uridine(341) in tmRNA + S-adenosyl-L-methionine = 5-methyluridine(341) in tmRNA + S-adenosyl-L-homocysteine + H(+). Dual-specificity methyltransferase that catalyzes the formation of 5-methyluridine at position 54 (m5U54) in all tRNAs, and that of position 341 (m5U341) in tmRNA (transfer-mRNA). This is tRNA/tmRNA (uracil-C(5))-methyltransferase from Escherichia coli O127:H6 (strain E2348/69 / EPEC).